The following is a 552-amino-acid chain: Sensor histidine kinase DpiB (552 aa).

Topologically, residues 1–21 (MLQLNENKQFAFFQRLAFPLR) are cytoplasmic. A helical membrane pass occupies residues 22–42 (IFLLILVFSIFVIAALAQYFT). Residues 43-182 (ASFEDYLTLH…DSWRAEFLLP (140 aa)) lie on the Periplasmic side of the membrane. A helical membrane pass occupies residues 183-203 (MAGVFVVLLGILMLLSWFLAA). The Cytoplasmic portion of the chain corresponds to 204–552 (HIRRQMMGME…NDSSINPIDR (349 aa)). A PAS domain is found at 222-292 (RQQEALFSSV…IDEKRQDVVA (71 aa)). The region spanning 344 to 541 (TLRHEHLNWM…LFSIYIPKVK (198 aa)) is the Histidine kinase domain. Phosphohistidine; by autocatalysis is present on H347.

Post-translationally, autophosphorylated.

The protein localises to the cell inner membrane. It carries out the reaction ATP + protein L-histidine = ADP + protein N-phospho-L-histidine.. With respect to regulation, autophosphorylation is induced in vitro by dithiothreitol (DTT). Functionally, member of the two-component regulatory system DpiA/DpiB, which is essential for expression of citrate-specific fermentation genes and genes involved in plasmid inheritance. Could be involved in response to both the presence of citrate and external redox conditions. Functions as a sensor kinase that phosphorylates DpiA in the presence of citrate. In Escherichia coli (strain K12), this protein is Sensor histidine kinase DpiB (dpiB).